The following is a 185-amino-acid chain: MSVMPDHWIKERALKDGMISPFVDHKEGTGVLSYGLSSYGYDARLDNKFKIFANTHSVVVDPKNFSQDSFVDREGDFCIIPPNSFMLAKTVEYFNIPRDVMVVCVGKSTYARCGIVVNVTPLEPGWSGYVTLEFSNTSPLPVKVYAFEGACQFLFFSGKERCSKSYDEAGGKYMGQSDVTLPIIS.

Residues 107-112 (KSTYAR), 131-133 (TLE), Gln152, Tyr166, and Gln176 contribute to the dCTP site. Residue Glu133 is the Proton donor/acceptor of the active site.

This sequence belongs to the dCTP deaminase family. In terms of assembly, homotrimer.

The enzyme catalyses dCTP + H2O + H(+) = dUTP + NH4(+). The protein operates within pyrimidine metabolism; dUMP biosynthesis; dUMP from dCTP (dUTP route): step 1/2. Catalyzes the deamination of dCTP to dUTP. This chain is dCTP deaminase, found in Anaplasma phagocytophilum (strain HZ).